The chain runs to 411 residues: Gamma-glutamyl phosphate reductase (411 aa).

Belongs to the gamma-glutamyl phosphate reductase family.

Its subcellular location is the cytoplasm. It catalyses the reaction L-glutamate 5-semialdehyde + phosphate + NADP(+) = L-glutamyl 5-phosphate + NADPH + H(+). The protein operates within amino-acid biosynthesis; L-proline biosynthesis; L-glutamate 5-semialdehyde from L-glutamate: step 2/2. In terms of biological role, catalyzes the NADPH-dependent reduction of L-glutamate 5-phosphate into L-glutamate 5-semialdehyde and phosphate. The product spontaneously undergoes cyclization to form 1-pyrroline-5-carboxylate. The sequence is that of Gamma-glutamyl phosphate reductase from Nautilia profundicola (strain ATCC BAA-1463 / DSM 18972 / AmH).